The sequence spans 609 residues: Dihydroxy-acid dehydratase (609 aa).

Asp81 is a binding site for Mg(2+). Cys122 is a [2Fe-2S] cluster binding site. The Mg(2+) site is built by Asp123 and Lys124. Lys124 is modified (N6-carboxylysine). Cys195 is a binding site for [2Fe-2S] cluster. Mg(2+) is bound at residue Glu491. Ser517 acts as the Proton acceptor in catalysis.

This sequence belongs to the IlvD/Edd family. As to quaternary structure, homodimer. Requires [2Fe-2S] cluster as cofactor. It depends on Mg(2+) as a cofactor.

It carries out the reaction (2R)-2,3-dihydroxy-3-methylbutanoate = 3-methyl-2-oxobutanoate + H2O. It catalyses the reaction (2R,3R)-2,3-dihydroxy-3-methylpentanoate = (S)-3-methyl-2-oxopentanoate + H2O. It participates in amino-acid biosynthesis; L-isoleucine biosynthesis; L-isoleucine from 2-oxobutanoate: step 3/4. It functions in the pathway amino-acid biosynthesis; L-valine biosynthesis; L-valine from pyruvate: step 3/4. Its function is as follows. Functions in the biosynthesis of branched-chain amino acids. Catalyzes the dehydration of (2R,3R)-2,3-dihydroxy-3-methylpentanoate (2,3-dihydroxy-3-methylvalerate) into 2-oxo-3-methylpentanoate (2-oxo-3-methylvalerate) and of (2R)-2,3-dihydroxy-3-methylbutanoate (2,3-dihydroxyisovalerate) into 2-oxo-3-methylbutanoate (2-oxoisovalerate), the penultimate precursor to L-isoleucine and L-valine, respectively. The polypeptide is Dihydroxy-acid dehydratase (Acinetobacter baumannii (strain AB307-0294)).